A 171-amino-acid chain; its full sequence is Endoribonuclease YbeY (171 aa).

3 residues coordinate Zn(2+): H126, H130, and H136.

The protein belongs to the endoribonuclease YbeY family. It depends on Zn(2+) as a cofactor.

Its subcellular location is the cytoplasm. Its function is as follows. Single strand-specific metallo-endoribonuclease involved in late-stage 70S ribosome quality control and in maturation of the 3' terminus of the 16S rRNA. In Rhizobium johnstonii (strain DSM 114642 / LMG 32736 / 3841) (Rhizobium leguminosarum bv. viciae), this protein is Endoribonuclease YbeY.